The chain runs to 325 residues: Phosphate acyltransferase (325 aa).

It belongs to the PlsX family. Homodimer. Probably interacts with PlsY.

The protein localises to the cytoplasm. The catalysed reaction is a fatty acyl-[ACP] + phosphate = an acyl phosphate + holo-[ACP]. Its pathway is lipid metabolism; phospholipid metabolism. In terms of biological role, catalyzes the reversible formation of acyl-phosphate (acyl-PO(4)) from acyl-[acyl-carrier-protein] (acyl-ACP). This enzyme utilizes acyl-ACP as fatty acyl donor, but not acyl-CoA. The chain is Phosphate acyltransferase from Staphylococcus epidermidis (strain ATCC 35984 / DSM 28319 / BCRC 17069 / CCUG 31568 / BM 3577 / RP62A).